Here is an 851-residue protein sequence, read N- to C-terminus: Envelope glycoprotein gp160 (851 aa).

The signal sequence occupies residues 1–32 (MRVKEKYQHLWRWGWRWGTMLLGMLMICSATE). Topologically, residues 33–679 (KLWVTVYFGV…ITNWLWYIKL (647 aa)) are extracellular. Cys-54 and Cys-74 are disulfide-bonded. Asn-88, Asn-136, Asn-141, Asn-156, Asn-160, Asn-186, Asn-197, Asn-230, Asn-234, Asn-241, Asn-262, Asn-276, Asn-295, Asn-301, Asn-332, Asn-339, and Asn-356 each carry an N-linked (GlcNAc...) asparagine; by host glycan. 5 disulfide bridges follow: Cys-119–Cys-205, Cys-126–Cys-196, Cys-131–Cys-157, Cys-218–Cys-247, and Cys-228–Cys-239. The V1 stretch occupies residues 131-156 (CTDLKNDTNTNSSSGRMIMEKGEIKN). The segment at 157-196 (CSFNISTSKRGKVQKEYAFFYKLDIIPIDNDTTSYTLTSC) is V2. A V3 region spans residues 296–330 (CTRPNNNTRKKIRIQRGPGRAFVTIGKIGNMRQAH). Cysteines 296 and 331 form a disulfide. The interval 364–374 (SSGGDPEIVTH) is CD4-binding loop. 2 disulfide bridges follow: Cys-378–Cys-440 and Cys-385–Cys-413. Positions 385–413 (CNSTQLFNSTWSTKGSNNTEGSDTITLPC) are V4. Residues Asn-386, Asn-392, Asn-401, Asn-443, and Asn-458 are each glycosylated (N-linked (GlcNAc...) asparagine; by host). 2 V5 regions span residues 456 to 466 (SNNESEIFRPG) and 458 to 466 (NESEIFRPG). The interval 507–527 (AVGIGALFLGFLGAAGSTMGA) is fusion peptide. An immunosuppression region spans residues 569–587 (KQLQARILAVERYLKDQQL). Cys-593 and Cys-599 form a disulfide bridge. N-linked (GlcNAc...) asparagine; by host glycosylation is found at Asn-606, Asn-611, Asn-620, Asn-632, and Asn-669. A coiled-coil region spans residues 628–662 (REINNYTSLIHSLIEESQNQQEKNEQELLELDKWA). An MPER; binding to GalCer region spans residues 657 to 678 (ELDKWASLWNWFNITNWLWYIK). A helical transmembrane segment spans residues 680–700 (FIMIVGGLVGLRIVFAVLSIV). Residues 701-851 (NRVRQGYSPL…IRQGLERILL (151 aa)) lie on the Cytoplasmic side of the membrane. The short motif at 707–710 (YSPL) is the YXXL motif; contains endocytosis signal element. The tract at residues 713-735 (QTHLPNPRGPDRPEGIEEEGGER) is disordered. A lipid anchor (S-palmitoyl cysteine; by host) is attached at Cys-759. The Di-leucine internalization motif signature appears at 850–851 (LL).

It belongs to the HIV-1 env protein family. As to quaternary structure, the mature envelope protein (Env) consists of a homotrimer of non-covalently associated gp120-gp41 heterodimers. The resulting complex protrudes from the virus surface as a spike. There seems to be as few as 10 spikes on the average virion. Interacts with host CD4, CCR5 and CXCR4. Gp120 also interacts with the C-type lectins CD209/DC-SIGN and CLEC4M/DC-SIGNR (collectively referred to as DC-SIGN(R)). Gp120 and gp41 interact with GalCer. Gp120 interacts with host ITGA4/ITGB7 complex; on CD4+ T-cells, this interaction results in rapid activation of integrin ITGAL/LFA-1, which facilitates efficient cell-to-cell spreading of HIV-1. Gp120 interacts with cell-associated heparan sulfate; this interaction increases virus infectivity on permissive cells and may be involved in infection of CD4- cells. In terms of assembly, the mature envelope protein (Env) consists of a homotrimer of non-covalently associated gp120-gp41 heterodimers. The resulting complex protrudes from the virus surface as a spike. There seems to be as few as 10 spikes on the average virion. Highly glycosylated by host. The high number of glycan on the protein is reffered to as 'glycan shield' because it contributes to hide protein sequence from adaptive immune system. In terms of processing, palmitoylation of the transmembrane protein and of Env polyprotein (prior to its proteolytic cleavage) is essential for their association with host cell membrane lipid rafts. Palmitoylation is therefore required for envelope trafficking to classical lipid rafts, but not for viral replication. Post-translationally, specific enzymatic cleavages in vivo yield mature proteins. Envelope glycoproteins are synthesized as an inactive precursor that is heavily N-glycosylated and processed likely by host cell furin in the Golgi to yield the mature SU and TM proteins. The cleavage site between SU and TM requires the minimal sequence [KR]-X-[KR]-R. About 2 of the 9 disulfide bonds of gp41 are reduced by P4HB/PDI, following binding to CD4 receptor.

It is found in the virion membrane. Its subcellular location is the host cell membrane. The protein localises to the host endosome membrane. In terms of biological role, oligomerizes in the host endoplasmic reticulum into predominantly trimers. In a second time, gp160 transits in the host Golgi, where glycosylation is completed. The precursor is then proteolytically cleaved in the trans-Golgi and thereby activated by cellular furin or furin-like proteases to produce gp120 and gp41. Its function is as follows. Attaches the virus to the host lymphoid cell by binding to the primary receptor CD4. This interaction induces a structural rearrangement creating a high affinity binding site for a chemokine coreceptor like CXCR4 and/or CCR5. Acts as a ligand for CD209/DC-SIGN and CLEC4M/DC-SIGNR, which are respectively found on dendritic cells (DCs), and on endothelial cells of liver sinusoids and lymph node sinuses. These interactions allow capture of viral particles at mucosal surfaces by these cells and subsequent transmission to permissive cells. HIV subverts the migration properties of dendritic cells to gain access to CD4+ T-cells in lymph nodes. Virus transmission to permissive T-cells occurs either in trans (without DCs infection, through viral capture and transmission), or in cis (following DCs productive infection, through the usual CD4-gp120 interaction), thereby inducing a robust infection. In trans infection, bound virions remain infectious over days and it is proposed that they are not degraded, but protected in non-lysosomal acidic organelles within the DCs close to the cell membrane thus contributing to the viral infectious potential during DCs' migration from the periphery to the lymphoid tissues. On arrival at lymphoid tissues, intact virions recycle back to DCs' cell surface allowing virus transmission to CD4+ T-cells. Acts as a class I viral fusion protein. Under the current model, the protein has at least 3 conformational states: pre-fusion native state, pre-hairpin intermediate state, and post-fusion hairpin state. During fusion of viral and target intracellular membranes, the coiled coil regions (heptad repeats) assume a trimer-of-hairpins structure, positioning the fusion peptide in close proximity to the C-terminal region of the ectodomain. The formation of this structure appears to drive apposition and subsequent fusion of viral and target cell membranes. Complete fusion occurs in host cell endosomes and is dynamin-dependent, however some lipid transfer might occur at the plasma membrane. The virus undergoes clathrin-dependent internalization long before endosomal fusion, thus minimizing the surface exposure of conserved viral epitopes during fusion and reducing the efficacy of inhibitors targeting these epitopes. Membranes fusion leads to delivery of the nucleocapsid into the cytoplasm. In Homo sapiens (Human), this protein is Envelope glycoprotein gp160.